Reading from the N-terminus, the 234-residue chain is LexA repressor (234 aa).

Residues 26 to 46 (FDEMKTALELTSKSGIHRLIT) constitute a DNA-binding region (H-T-H motif). Residues Ser-155 and Lys-193 each act as for autocatalytic cleavage activity in the active site.

Belongs to the peptidase S24 family. In terms of assembly, homodimer.

The enzyme catalyses Hydrolysis of Ala-|-Gly bond in repressor LexA.. Its function is as follows. Represses a number of genes involved in the response to DNA damage (SOS response), including recA and lexA. In the presence of single-stranded DNA, RecA interacts with LexA causing an autocatalytic cleavage which disrupts the DNA-binding part of LexA, leading to derepression of the SOS regulon and eventually DNA repair. The chain is LexA repressor from Bartonella henselae (strain ATCC 49882 / DSM 28221 / CCUG 30454 / Houston 1) (Rochalimaea henselae).